Consider the following 953-residue polypeptide: Translation initiation factor IF-2 (953 aa).

2 disordered regions span residues 52–241 (KASK…QQEA) and 279–363 (TKLK…TERK). 3 stretches are compositionally biased toward basic and acidic residues: residues 80 to 89 (TGSEHVEKTQ), 98 to 111 (FKAE…EQAA), and 140 to 188 (QGDK…ENHK). The span at 191-207 (RFTNQKKQGRQEPQSKS) shows a compositional bias: polar residues. Residues 229 to 241 (RQSETRFRAQQEA) are compositionally biased toward basic and acidic residues. A compositionally biased stretch (polar residues) spans 282–291 (KSSNISAKST). Residues 300–317 (ARPEKNRELTHHSQEGQK) show a composition bias toward basic and acidic residues. Residues 322 to 338 (SWNSQNQVRNQKNSNWN) show a composition bias toward low complexity. The segment covering 339–348 (KNKKTKKGKN) has biased composition (basic residues). Residues 454-623 (ERAPVVTIMG…LLVAEVEELK (170 aa)) enclose the tr-type G domain. The interval 463-470 (GHVDHGKT) is G1. 463-470 (GHVDHGKT) contacts GTP. The segment at 488–492 (GITQH) is G2. The tract at residues 509–512 (DTPG) is G3. GTP-binding positions include 509-513 (DTPGH) and 563-566 (NKID). The interval 563 to 566 (NKID) is G4. Residues 599–601 (SAK) form a G5 region.

The protein belongs to the TRAFAC class translation factor GTPase superfamily. Classic translation factor GTPase family. IF-2 subfamily.

It localises to the cytoplasm. In terms of biological role, one of the essential components for the initiation of protein synthesis. Protects formylmethionyl-tRNA from spontaneous hydrolysis and promotes its binding to the 30S ribosomal subunits. Also involved in the hydrolysis of GTP during the formation of the 70S ribosomal complex. This Streptococcus pyogenes serotype M4 (strain MGAS10750) protein is Translation initiation factor IF-2.